We begin with the raw amino-acid sequence, 370 residues long: Queuine tRNA-ribosyltransferase (370 aa).

Asp-92 serves as the catalytic Proton acceptor. Residues 92–96 (DSGGF), Asp-146, Gln-190, and Gly-217 contribute to the substrate site. Positions 248 to 254 (GVGTPEN) are RNA binding. The Nucleophile role is filled by Asp-267. Residues Cys-305, Cys-307, Cys-310, and His-336 each contribute to the Zn(2+) site.

It belongs to the queuine tRNA-ribosyltransferase family. As to quaternary structure, homodimer. Within each dimer, one monomer is responsible for RNA recognition and catalysis, while the other monomer binds to the replacement base PreQ1. It depends on Zn(2+) as a cofactor.

The enzyme catalyses 7-aminomethyl-7-carbaguanine + guanosine(34) in tRNA = 7-aminomethyl-7-carbaguanosine(34) in tRNA + guanine. The protein operates within tRNA modification; tRNA-queuosine biosynthesis. Its function is as follows. Catalyzes the base-exchange of a guanine (G) residue with the queuine precursor 7-aminomethyl-7-deazaguanine (PreQ1) at position 34 (anticodon wobble position) in tRNAs with GU(N) anticodons (tRNA-Asp, -Asn, -His and -Tyr). Catalysis occurs through a double-displacement mechanism. The nucleophile active site attacks the C1' of nucleotide 34 to detach the guanine base from the RNA, forming a covalent enzyme-RNA intermediate. The proton acceptor active site deprotonates the incoming PreQ1, allowing a nucleophilic attack on the C1' of the ribose to form the product. After dissociation, two additional enzymatic reactions on the tRNA convert PreQ1 to queuine (Q), resulting in the hypermodified nucleoside queuosine (7-(((4,5-cis-dihydroxy-2-cyclopenten-1-yl)amino)methyl)-7-deazaguanosine). The polypeptide is Queuine tRNA-ribosyltransferase (Desulforapulum autotrophicum (strain ATCC 43914 / DSM 3382 / VKM B-1955 / HRM2) (Desulfobacterium autotrophicum)).